Here is a 60-residue protein sequence, read N- to C-terminus: Cytotoxin 1 (60 aa).

Cystine bridges form between Cys-3/Cys-21, Cys-14/Cys-38, Cys-42/Cys-53, and Cys-54/Cys-59.

Belongs to the three-finger toxin family. Short-chain subfamily. Type IA cytotoxin sub-subfamily. As to quaternary structure, monomer in solution; Homodimer and oligomer in the presence of negatively charged lipids forming a pore with a size ranging between 20 and 30 Angstroms. In terms of tissue distribution, expressed by the venom gland.

Its subcellular location is the secreted. The protein resides in the target cell membrane. Functionally, produces complete blockade of auricular contraction, which is irreversible at high concentrations. Induces apoptosis in leukemic cells. Possesses anti-arthritic and anti-inflammatory potential. This chain is Cytotoxin 1, found in Naja kaouthia (Monocled cobra).